The following is a 92-amino-acid chain: YcgL domain-containing protein ASA_2166 (92 aa).

One can recognise a YcgL domain in the interval 1–85; that stretch reads MLCAVYKSRK…PPENLLEQHK (85 aa).

This Aeromonas salmonicida (strain A449) protein is YcgL domain-containing protein ASA_2166.